A 663-amino-acid chain; its full sequence is Ras and EF-hand domain-containing protein (663 aa).

EF-hand domains follow at residues 1–33 (MNHA…CREL) and 35–70 (VPAD…VSEA). Residues Asp-14, Asn-16, Ser-18, Arg-20, Asp-25, Asp-48, Asp-50, Asp-52, Tyr-54, and Asp-59 each contribute to the Ca(2+) site. The stretch at 122–297 (ELLLQQFEDL…LKKMVMEFQS (176 aa)) forms a coiled coil. Residues 324 to 336 (SQENASTKRQLSP) show a composition bias toward polar residues. The tract at residues 324–343 (SQENASTKRQLSPRNEVLPR) is disordered. GTP contacts are provided by residues 477 to 482 (GSGKSS), 580 to 583 (NKVD), and 615 to 616 (AK).

Belongs to the small GTPase superfamily. Rab family. Homodimer.

It is found in the cytoplasm. It localises to the perinuclear region. In terms of biological role, binds predominantly GDP, and also GTP. This Danio rerio (Zebrafish) protein is Ras and EF-hand domain-containing protein (rasef).